A 289-amino-acid chain; its full sequence is Serine/threonine-protein phosphatase Pgam5, mitochondrial (289 aa).

Residues 7-23 traverse the membrane as a helical segment; it reads FVCGTGAGLAAYYLQRL.

Belongs to the phosphoglycerate mutase family. BPG-dependent PGAM subfamily. Interacts with Pk92B/ASK1.

It is found in the mitochondrion outer membrane. The enzyme catalyses O-phospho-L-seryl-[protein] + H2O = L-seryl-[protein] + phosphate. It carries out the reaction O-phospho-L-threonyl-[protein] + H2O = L-threonyl-[protein] + phosphate. Displays phosphatase activity for serine/threonine residues, and dephosphorylates and activates Pk92B kinase. Has apparently no phosphoglycerate mutase activity. This chain is Serine/threonine-protein phosphatase Pgam5, mitochondrial (Pgam5), found in Drosophila melanogaster (Fruit fly).